Here is a 156-residue protein sequence, read N- to C-terminus: Phosphoribosyl-AMP cyclohydrolase (156 aa).

Residue Asp-106 participates in Mg(2+) binding. Cys-107 provides a ligand contact to Zn(2+). 2 residues coordinate Mg(2+): Asp-108 and Asp-110. The Zn(2+) site is built by Cys-123 and Cys-130.

The protein belongs to the PRA-CH family. Homodimer. It depends on Mg(2+) as a cofactor. The cofactor is Zn(2+).

Its subcellular location is the cytoplasm. It carries out the reaction 1-(5-phospho-beta-D-ribosyl)-5'-AMP + H2O = 1-(5-phospho-beta-D-ribosyl)-5-[(5-phospho-beta-D-ribosylamino)methylideneamino]imidazole-4-carboxamide. It functions in the pathway amino-acid biosynthesis; L-histidine biosynthesis; L-histidine from 5-phospho-alpha-D-ribose 1-diphosphate: step 3/9. Its function is as follows. Catalyzes the hydrolysis of the adenine ring of phosphoribosyl-AMP. The polypeptide is Phosphoribosyl-AMP cyclohydrolase (Gluconobacter oxydans (strain 621H) (Gluconobacter suboxydans)).